We begin with the raw amino-acid sequence, 171 residues long: MRVSWLESRCDTPFANNLSFISSGSSSSSSFTLASTACRNSCLCSSSIFFQVLRRNCSSNCCSISNVDISLSAFSFNRFETSSKMARYNLPCPRSLLAILSPPKCCNSPAISCQLRRCCSGCPSIDLNSSLRISTLERRVLPFSLWVSSRAKFANCSSLQCWRKSRSESFR.

This is an uncharacterized protein from Escherichia coli O157:H7.